The sequence spans 424 residues: Kynureninase (424 aa).

Pyridoxal 5'-phosphate-binding positions include Leu109, Thr110, 137–140, Asp222, His225, and Tyr247; that span reads FPSD. Position 248 is an N6-(pyridoxal phosphate)lysine (Lys248). Pyridoxal 5'-phosphate-binding residues include Trp278 and Asn306.

This sequence belongs to the kynureninase family. In terms of assembly, homodimer. Requires pyridoxal 5'-phosphate as cofactor.

It catalyses the reaction L-kynurenine + H2O = anthranilate + L-alanine + H(+). The catalysed reaction is 3-hydroxy-L-kynurenine + H2O = 3-hydroxyanthranilate + L-alanine + H(+). It functions in the pathway amino-acid degradation; L-kynurenine degradation; L-alanine and anthranilate from L-kynurenine: step 1/1. Its pathway is cofactor biosynthesis; NAD(+) biosynthesis; quinolinate from L-kynurenine: step 2/3. Functionally, catalyzes the cleavage of L-kynurenine (L-Kyn) and L-3-hydroxykynurenine (L-3OHKyn) into anthranilic acid (AA) and 3-hydroxyanthranilic acid (3-OHAA), respectively. The chain is Kynureninase from Koribacter versatilis (strain Ellin345).